A 310-amino-acid chain; its full sequence is Ribose-phosphate pyrophosphokinase (310 aa).

ATP is bound by residues 33–35 and 92–93; these read DGE and RQ. Positions 127 and 166 each coordinate Mg(2+). The active site involves Lys189. D-ribose 5-phosphate is bound by residues Arg191, Asp215, and 219-223; that span reads DTAGT.

It belongs to the ribose-phosphate pyrophosphokinase family. Class I subfamily. In terms of assembly, homohexamer. Mg(2+) serves as cofactor.

The protein localises to the cytoplasm. The catalysed reaction is D-ribose 5-phosphate + ATP = 5-phospho-alpha-D-ribose 1-diphosphate + AMP + H(+). Its pathway is metabolic intermediate biosynthesis; 5-phospho-alpha-D-ribose 1-diphosphate biosynthesis; 5-phospho-alpha-D-ribose 1-diphosphate from D-ribose 5-phosphate (route I): step 1/1. Functionally, involved in the biosynthesis of the central metabolite phospho-alpha-D-ribosyl-1-pyrophosphate (PRPP) via the transfer of pyrophosphoryl group from ATP to 1-hydroxyl of ribose-5-phosphate (Rib-5-P). This Bordetella pertussis (strain Tohama I / ATCC BAA-589 / NCTC 13251) protein is Ribose-phosphate pyrophosphokinase.